Here is an 81-residue protein sequence, read N- to C-terminus: Cytoplasmic envelopment protein 3 (81 aa).

Glycine 2 is lipidated: N-myristoyl glycine; by host. A Di-leucine-like internalization motif motif is present at residues 22 to 23 (LV). The interval 41–47 (DFDENVT) is asp/Glu-rich (acidic). The disordered stretch occupies residues 47–81 (TEDADKSTQRRPRVIDVTPKRKPSGKSSHSKCAKC). A compositionally biased stretch (basic residues) spans 66 to 81 (KRKPSGKSSHSKCAKC).

The protein belongs to the herpesviridae cytoplasmic envelopment protein 3 family. In terms of assembly, interacts with cytoplasmic envelopment protein 2; this interaction is essential for the proper localization of each protein to the assembly complex and thus for the production of infectious virus. Post-translationally, myristoylation and palmitoylation (probably on one or more of the nearby cysteines at the N-terminus) enable membrane-binding and Golgi apparatus-specific targeting and are essential for efficient packaging. In terms of processing, phosphorylated. Phosphorylation does not seem to be required for recycling to the host Golgi apparatus. Packaging is selective for underphosphorylated forms.

It localises to the virion tegument. It is found in the virion membrane. Its subcellular location is the host cell membrane. The protein resides in the host Golgi apparatus membrane. Functionally, plays an important role in the cytoplasmic envelopment of tegument proteins and capsids during the assembly and egress processes. Also participates in viral entry at the fusion step probably by regulating the core fusion machinery. The sequence is that of Cytoplasmic envelopment protein 3 from Homo sapiens (Human).